A 220-amino-acid chain; its full sequence is Probable cytidylate kinase (220 aa).

Residue 10-18 (GPAASGKSS) coordinates ATP.

This sequence belongs to the cytidylate kinase family. Type 1 subfamily.

The enzyme catalyses CMP + ATP = CDP + ADP. The catalysed reaction is dCMP + ATP = dCDP + ADP. This Encephalitozoon cuniculi (strain GB-M1) (Microsporidian parasite) protein is Probable cytidylate kinase.